The primary structure comprises 2082 residues: Probable ATP-dependent helicase PF08_0048 (2082 aa).

An HSA domain is found at Lys-66–Lys-138. Over residues Asn-209–Val-221 the composition is skewed to low complexity. Disordered stretches follow at residues Asn-209 to Thr-234 and Asn-301 to Arg-470. Composition is skewed to basic and acidic residues over residues Asn-419–Asn-448 and Thr-455–Asn-465. Residues Lys-476–Asn-531 adopt a coiled-coil conformation. Residues Asp-532 to Ile-641 are disordered. Residues Thr-536–Arg-545 show a composition bias toward basic and acidic residues. Positions Asp-579–Asp-598 are enriched in low complexity. Residues Asn-599–Asn-627 show a composition bias toward acidic residues. The Helicase ATP-binding domain maps to Leu-674–Asn-839. Asp-687–Thr-694 contributes to the ATP binding site. A DEAH box motif is present at residues Asp-790–His-793. The tract at residues Glu-1199–Asn-1255 is disordered. The Helicase C-terminal domain occupies Ala-1772 to Asn-1922. Residues Glu-1972–Glu-2060 are a coiled coil.

It belongs to the SNF2/RAD54 helicase family. SWR1 subfamily. In terms of assembly, component of a chromatin-remodeling complex.

The protein resides in the nucleus. Catalytic component of a chromatin remodeling complex. The polypeptide is Probable ATP-dependent helicase PF08_0048 (Plasmodium falciparum (isolate 3D7)).